The primary structure comprises 77 residues: Acyl carrier protein (77 aa).

Positions 1–76 (MSLEDDVKAI…DVIKYIQERQ (76 aa)) constitute a Carrier domain. The residue at position 36 (Ser-36) is an O-(pantetheine 4'-phosphoryl)serine.

Belongs to the acyl carrier protein (ACP) family. In terms of processing, 4'-phosphopantetheine is transferred from CoA to a specific serine of apo-ACP by AcpS. This modification is essential for activity because fatty acids are bound in thioester linkage to the sulfhydryl of the prosthetic group.

It is found in the cytoplasm. Its pathway is lipid metabolism; fatty acid biosynthesis. In terms of biological role, carrier of the growing fatty acid chain in fatty acid biosynthesis. The chain is Acyl carrier protein from Chlamydia muridarum (strain MoPn / Nigg).